The primary structure comprises 376 residues: GTPase Obg (376 aa).

The region spanning Met1–Ile158 is the Obg domain. Residues Ala159 to Lys359 enclose the OBG-type G domain. GTP-binding positions include Gly165 to Ser172, Phe190 to Thr194, Asp212 to Gly215, Thr280 to Asp283, and Ser340 to Ala342. The Mg(2+) site is built by Ser172 and Thr192.

This sequence belongs to the TRAFAC class OBG-HflX-like GTPase superfamily. OBG GTPase family. In terms of assembly, monomer. It depends on Mg(2+) as a cofactor.

It localises to the cytoplasm. Its function is as follows. An essential GTPase which binds GTP, GDP and possibly (p)ppGpp with moderate affinity, with high nucleotide exchange rates and a fairly low GTP hydrolysis rate. Plays a role in control of the cell cycle, stress response, ribosome biogenesis and in those bacteria that undergo differentiation, in morphogenesis control. The protein is GTPase Obg of Campylobacter curvus (strain 525.92).